The chain runs to 231 residues: Cytochrome b-c1 complex subunit Rieske, mitochondrial (231 aa).

A mitochondrion-targeting transit peptide spans 1-24 (MAPVSIVSRAAMRAAAAPARAVRA). Residues 25-32 (LTTSTALQ) constitute a propeptide, removed in mature form. Topologically, residues 33-65 (GSSSSTFESPFKGESKAAKVPDFGKYMSKAPPS) are mitochondrial matrix. Residues 66 to 95 (TNMLFSYFMVGTMGAITAAGAKSTIQEFLK) traverse the membrane as a helical segment. The Mitochondrial intermembrane segment spans residues 96–231 (NMSASADVLA…FPEEGKLVIG (136 aa)). In terms of domain architecture, Rieske spans 134-229 (RHRTPAEIEE…YEFPEEGKLV (96 aa)). Cysteine 174, histidine 176, cysteine 193, and histidine 196 together coordinate [2Fe-2S] cluster. An intrachain disulfide couples cysteine 179 to cysteine 195.

Belongs to the Rieske iron-sulfur protein family. As to quaternary structure, component of the ubiquinol-cytochrome c oxidoreductase (cytochrome b-c1 complex, complex III, CIII), a multisubunit enzyme composed of 10 subunits. The complex is composed of 3 respiratory subunits cytochrome b (cob), cytochrome c1 (cyt-1) and Rieske protein (fes-1), 2 core protein subunits pep and ucr-1, and 5 low-molecular weight protein subunits qcr6, qcr7, qcr8, qcr9 and probably NCU16844/qcr10. The complex exists as an obligatory dimer and forms supercomplexes (SCs) in the inner mitochondrial membrane with NADH-ubiquinone oxidoreductase (complex I, CI) and cytochrome c oxidase (complex IV, CIV), resulting in different assemblies (supercomplexes SCI(1)III(2), SCIII(2)IV(1) and SCIII(2)IV(2) as well as higher order I(x)III(y)IV(z) megacomplexes). It depends on [2Fe-2S] cluster as a cofactor. Processed by both the mitochondrial processing peptidase (MPP) and the mitochondrial intermediate protease (MIP). Initially, MPP removes 25 amino acids from the newly imported precursor in the mitochondrial matrix. This proteolytic processing is then followed by a second proteolytic cleavage by MIP, which removes an octapeptide to generate mature-sized Rieske protein.

The protein resides in the mitochondrion inner membrane. It catalyses the reaction a quinol + 2 Fe(III)-[cytochrome c](out) = a quinone + 2 Fe(II)-[cytochrome c](out) + 2 H(+)(out). In terms of biological role, component of the ubiquinol-cytochrome c oxidoreductase, a multisubunit transmembrane complex that is part of the mitochondrial electron transport chain which drives oxidative phosphorylation. The respiratory chain contains 3 multisubunit complexes succinate dehydrogenase (complex II, CII), ubiquinol-cytochrome c oxidoreductase (cytochrome b-c1 complex, complex III, CIII) and cytochrome c oxidase (complex IV, CIV), that cooperate to transfer electrons derived from NADH and succinate to molecular oxygen, creating an electrochemical gradient over the inner membrane that drives transmembrane transport and the ATP synthase. The cytochrome b-c1 complex catalyzes electron transfer from ubiquinol to cytochrome c, linking this redox reaction to translocation of protons across the mitochondrial inner membrane, with protons being carried across the membrane as hydrogens on the quinol. In the process called Q cycle, 2 protons are consumed from the matrix, 4 protons are released into the intermembrane space and 2 electrons are passed to cytochrome c. The Rieske protein is a catalytic core subunit containing a [2Fe-2S] iron-sulfur cluster. It cycles between 2 conformational states during catalysis to transfer electrons from the quinol bound in the Q(0) site in cytochrome b to cytochrome c1. In Neurospora crassa (strain ATCC 24698 / 74-OR23-1A / CBS 708.71 / DSM 1257 / FGSC 987), this protein is Cytochrome b-c1 complex subunit Rieske, mitochondrial (fes-1).